The following is a 290-amino-acid chain: Ribosomal protein L11 methyltransferase (290 aa).

S-adenosyl-L-methionine is bound by residues T135, G158, D180, and N227.

This sequence belongs to the methyltransferase superfamily. PrmA family.

It is found in the cytoplasm. It carries out the reaction L-lysyl-[protein] + 3 S-adenosyl-L-methionine = N(6),N(6),N(6)-trimethyl-L-lysyl-[protein] + 3 S-adenosyl-L-homocysteine + 3 H(+). Methylates ribosomal protein L11. This chain is Ribosomal protein L11 methyltransferase, found in Mesorhizobium japonicum (strain LMG 29417 / CECT 9101 / MAFF 303099) (Mesorhizobium loti (strain MAFF 303099)).